The primary structure comprises 338 residues: ABC transporter I family member 6, chloroplastic (338 aa).

Residues 1-66 (MAGVNLQLRH…RTTRRSVIVS (66 aa)) constitute a chloroplast transit peptide. The 247-residue stretch at 92-338 (LEVRDLRAVI…EKEGYKAISG (247 aa)) folds into the ABC transporter domain. An ATP-binding site is contributed by 126 to 133 (GKNGSGKS).

Belongs to the ABC transporter superfamily. ABCI family. Interacts with NAP6. In terms of tissue distribution, present in all organs, with higher levels in aerial parts.

Its subcellular location is the plastid. It is found in the chloroplast. In terms of biological role, essential protein. Required during embryo development, especially at early stages. Involved in chloroplast differentiation. The chain is ABC transporter I family member 6, chloroplastic (ABCI6) from Arabidopsis thaliana (Mouse-ear cress).